Here is a 421-residue protein sequence, read N- to C-terminus: UDP-N-acetylglucosamine 1-carboxyvinyltransferase (421 aa).

22–23 (KN) is a phosphoenolpyruvate binding site. Arg93 is a UDP-N-acetyl-alpha-D-glucosamine binding site. Residue Cys117 is the Proton donor of the active site. A 2-(S-cysteinyl)pyruvic acid O-phosphothioketal modification is found at Cys117. Residues 122 to 126 (RPVDL), Asp308, and Ile330 contribute to the UDP-N-acetyl-alpha-D-glucosamine site.

Belongs to the EPSP synthase family. MurA subfamily.

The protein localises to the cytoplasm. The catalysed reaction is phosphoenolpyruvate + UDP-N-acetyl-alpha-D-glucosamine = UDP-N-acetyl-3-O-(1-carboxyvinyl)-alpha-D-glucosamine + phosphate. The protein operates within cell wall biogenesis; peptidoglycan biosynthesis. Cell wall formation. Adds enolpyruvyl to UDP-N-acetylglucosamine. The chain is UDP-N-acetylglucosamine 1-carboxyvinyltransferase from Pseudomonas entomophila (strain L48).